The following is a 290-amino-acid chain: uncharacterized protein (290 aa).

Positions methionine 1–alanine 25 are cleaved as a signal peptide. Cysteine 26 is lipidated: N-palmitoyl cysteine. The S-diacylglycerol cysteine moiety is linked to residue cysteine 26. Residues glycine 183 to phenylalanine 203 form a disordered region. A compositionally biased stretch (low complexity) spans serine 186–glycine 197.

It belongs to the MG439/MG440 family.

The protein localises to the cell membrane. This is an uncharacterized protein from Mycoplasma pneumoniae (strain ATCC 29342 / M129 / Subtype 1) (Mycoplasmoides pneumoniae).